The sequence spans 323 residues: L-lactate dehydrogenase (323 aa).

Val-12, Asp-33, and Tyr-65 together coordinate NAD(+). Substrate contacts are provided by residues Arg-94 and 126–129; that span reads NPCD. An NAD(+)-binding site is contributed by Thr-149. Residue 154 to 157 participates in substrate binding; that stretch reads ETMR. His-181 serves as the catalytic Proton acceptor. Thr-234 provides a ligand contact to substrate.

This sequence belongs to the LDH/MDH superfamily. LDH family. In terms of assembly, homotetramer.

It localises to the cytoplasm. It carries out the reaction (S)-lactate + NAD(+) = pyruvate + NADH + H(+). The protein operates within fermentation; pyruvate fermentation to lactate; (S)-lactate from pyruvate: step 1/1. Functionally, catalyzes the conversion of lactate to pyruvate. The protein is L-lactate dehydrogenase of Mycoplasmoides gallisepticum (strain R(low / passage 15 / clone 2)) (Mycoplasma gallisepticum).